Consider the following 397-residue polypeptide: Succinate--CoA ligase [ADP-forming] subunit beta (397 aa).

The ATP-grasp domain occupies Lys-9–Glu-254. ATP-binding positions include Lys-46, Gly-53–Gly-55, Glu-109, Ala-112, and Glu-117. 2 residues coordinate Mg(2+): Asn-209 and Asp-223. Substrate is bound by residues Asn-274 and Gly-331–Met-333.

This sequence belongs to the succinate/malate CoA ligase beta subunit family. As to quaternary structure, heterotetramer of two alpha and two beta subunits. It depends on Mg(2+) as a cofactor.

It catalyses the reaction succinate + ATP + CoA = succinyl-CoA + ADP + phosphate. It carries out the reaction GTP + succinate + CoA = succinyl-CoA + GDP + phosphate. The protein operates within carbohydrate metabolism; tricarboxylic acid cycle; succinate from succinyl-CoA (ligase route): step 1/1. Functionally, succinyl-CoA synthetase functions in the citric acid cycle (TCA), coupling the hydrolysis of succinyl-CoA to the synthesis of either ATP or GTP and thus represents the only step of substrate-level phosphorylation in the TCA. The beta subunit provides nucleotide specificity of the enzyme and binds the substrate succinate, while the binding sites for coenzyme A and phosphate are found in the alpha subunit. In Rhizobium johnstonii (strain DSM 114642 / LMG 32736 / 3841) (Rhizobium leguminosarum bv. viciae), this protein is Succinate--CoA ligase [ADP-forming] subunit beta.